The sequence spans 328 residues: Phosphatidate cytidylyltransferase (328 aa).

The span at 15-29 (SGRSATKSVTTNDAG) shows a compositional bias: polar residues. The segment at 15 to 50 (SGRSATKSVTTNDAGTGNPAEQPARGAKQQPATETS) is disordered. 7 helical membrane-spanning segments follow: residues 58–78 (AAIV…VFVP), 103–123 (AGYL…VWLT), 124–144 (WPFG…VCMI), 173–193 (ATVF…MLVY), 202–222 (FCMM…GVLF), 239–259 (GFAG…TFLV), and 263–283 (PWIG…GDLV).

The protein belongs to the CDS family.

The protein localises to the cell membrane. It carries out the reaction a 1,2-diacyl-sn-glycero-3-phosphate + CTP + H(+) = a CDP-1,2-diacyl-sn-glycerol + diphosphate. The protein operates within phospholipid metabolism; CDP-diacylglycerol biosynthesis; CDP-diacylglycerol from sn-glycerol 3-phosphate: step 3/3. In Mycobacterium tuberculosis (strain CDC 1551 / Oshkosh), this protein is Phosphatidate cytidylyltransferase (cdsA).